A 38-amino-acid chain; its full sequence is Large ribosomal subunit protein bL36 (38 aa).

Belongs to the bacterial ribosomal protein bL36 family.

The polypeptide is Large ribosomal subunit protein bL36 (Myxococcus xanthus (strain DK1622)).